The primary structure comprises 113 residues: Mediator of RNA polymerase II transcription subunit 11 (113 aa).

Belongs to the Mediator complex subunit 11 family. In terms of assembly, component of the Mediator complex.

It is found in the nucleus. Functionally, component of the Mediator complex, a coactivator involved in the regulated transcription of nearly all RNA polymerase II-dependent genes. Mediator functions as a bridge to convey information from gene-specific regulatory proteins to the basal RNA polymerase II transcription machinery. Mediator is recruited to promoters by direct interactions with regulatory proteins and serves as a scaffold for the assembly of a functional pre-initiation complex with RNA polymerase II and the general transcription factors. This is Mediator of RNA polymerase II transcription subunit 11 (MED11) from Eremothecium gossypii (strain ATCC 10895 / CBS 109.51 / FGSC 9923 / NRRL Y-1056) (Yeast).